The sequence spans 238 residues: Androgen-induced gene 1 protein (238 aa).

At 1–12 (MALVPCQVLRMA) the chain is on the cytoplasmic side. Residues 13–30 (ILLSYCSILCNYKAIEMP) form a helical membrane-spanning segment. At 31 to 44 (SHQTYGGSWKFLTF) the chain is on the extracellular side. Residues 45–67 (IDLVIQAVFFGICVLTDLSSLLT) traverse the membrane as a helical segment. The Cytoplasmic portion of the chain corresponds to 68–87 (RGSGNQEQERQLKKLISLRD). Residues 88 to 110 (WMLAVLAFPVGVFVVAVFWIIYA) form a helical membrane-spanning segment. The Extracellular segment spans residues 111 to 124 (YDREMIYPKLLDNF). Residues 125 to 144 (IPGWLNHGMHTTVLPFILIE) form a helical membrane-spanning segment. Over 145–156 (MRTSHHQYPSRS) the chain is Cytoplasmic. Residues 157-179 (SGLTAICTFSVGYILWVCWVHHV) form a helical membrane-spanning segment. Residues 180-193 (TGMWVYPFLEHIGP) lie on the Extracellular side of the membrane. The chain crosses the membrane as a helical span at residues 194-216 (GARIIFFGSTTILMNFLYLLGEV). The Cytoplasmic segment spans residues 217–238 (LNNYIWDTQKSMEEEKEKPKLE).

Belongs to the AIG1 family. As to expression, highly expressed in heart, ovary, testis, liver, and kidney, at lower levels in spleen, prostate, brain, skeletal muscle, pancreas, small intestine and colon, and undetected in peripheral blood leukocytes, thymus, lung and placenta. AIG1 expression is higher in hair follicles from males than from females.

The protein resides in the cell membrane. The enzyme catalyses 9-hexadecanoyloxy-octadecanoate + H2O = 9-hydroxy-octadecanoate + hexadecanoate + H(+). The catalysed reaction is 12-hexadecanoyloxy-octadecanoate + H2O = 12-hydroxyoctadecanoate + hexadecanoate + H(+). It carries out the reaction 9-(9Z-hexadecenoyloxy)-octadecanoate + H2O = (9Z)-hexadecenoate + 9-hydroxy-octadecanoate + H(+). It catalyses the reaction 12-(9Z-hexadecenoyloxy)-octadecanoate + H2O = 12-hydroxyoctadecanoate + (9Z)-hexadecenoate + H(+). The enzyme catalyses 13-(9Z-hexadecenoyloxy)-octadecanoate + H2O = 13-hydroxy-octadecanoate + (9Z)-hexadecenoate + H(+). The catalysed reaction is 9-octadecanoyloxy-octadecanoate + H2O = 9-hydroxy-octadecanoate + octadecanoate + H(+). It carries out the reaction 12-octadecanoyloxy-octadecanoate + H2O = 12-hydroxyoctadecanoate + octadecanoate + H(+). It catalyses the reaction 13-octadecanoyloxy-octadecanoate + H2O = 13-hydroxy-octadecanoate + octadecanoate + H(+). The enzyme catalyses 9-(9Z-octadecenoyloxy)-octadecanoate + H2O = 9-hydroxy-octadecanoate + (9Z)-octadecenoate + H(+). The catalysed reaction is 12-(9Z-octadecenoyloxy)-octadecanoate + H2O = 12-hydroxyoctadecanoate + (9Z)-octadecenoate + H(+). It carries out the reaction 13-(9Z-octadecenoyloxy)-octadecanoate + H2O = 13-hydroxy-octadecanoate + (9Z)-octadecenoate + H(+). It catalyses the reaction 5-(9Z-hexadecenoyloxy)-octadecanoate + H2O = 5-hydroxy-octadecanoate + (9Z)-hexadecenoate + H(+). With respect to regulation, inhibited by N-hydroxyhydantoin carbamate JJH260 and beta-lactone KC01. Functionally, hydrolyzes bioactive fatty-acid esters of hydroxy-fatty acids (FAHFAs), but not other major classes of lipids. Show a preference for FAHFAs with branching distal from the carboxylate head group of the lipids. In Homo sapiens (Human), this protein is Androgen-induced gene 1 protein (AIG1).